A 739-amino-acid polypeptide reads, in one-letter code: Phosphoribosylformylglycinamidine synthase subunit PurL (739 aa).

Residue H53 is part of the active site. ATP is bound by residues Y56 and K95. E97 contributes to the Mg(2+) binding site. Substrate-binding positions include 98 to 101 (SHNH) and R120. The Proton acceptor role is filled by H99. D121 lines the Mg(2+) pocket. Q244 contributes to the substrate binding site. D274 serves as a coordination point for Mg(2+). 318–320 (ESQ) contributes to the substrate binding site. Positions 501 and 538 each coordinate ATP. N539 provides a ligand contact to Mg(2+). S541 serves as a coordination point for substrate.

This sequence belongs to the FGAMS family. In terms of assembly, monomer. Part of the FGAM synthase complex composed of 1 PurL, 1 PurQ and 2 PurS subunits.

It is found in the cytoplasm. The catalysed reaction is N(2)-formyl-N(1)-(5-phospho-beta-D-ribosyl)glycinamide + L-glutamine + ATP + H2O = 2-formamido-N(1)-(5-O-phospho-beta-D-ribosyl)acetamidine + L-glutamate + ADP + phosphate + H(+). It participates in purine metabolism; IMP biosynthesis via de novo pathway; 5-amino-1-(5-phospho-D-ribosyl)imidazole from N(2)-formyl-N(1)-(5-phospho-D-ribosyl)glycinamide: step 1/2. Part of the phosphoribosylformylglycinamidine synthase complex involved in the purines biosynthetic pathway. Catalyzes the ATP-dependent conversion of formylglycinamide ribonucleotide (FGAR) and glutamine to yield formylglycinamidine ribonucleotide (FGAM) and glutamate. The FGAM synthase complex is composed of three subunits. PurQ produces an ammonia molecule by converting glutamine to glutamate. PurL transfers the ammonia molecule to FGAR to form FGAM in an ATP-dependent manner. PurS interacts with PurQ and PurL and is thought to assist in the transfer of the ammonia molecule from PurQ to PurL. The protein is Phosphoribosylformylglycinamidine synthase subunit PurL of Listeria monocytogenes serotype 4a (strain HCC23).